Consider the following 120-residue polypeptide: Transcription elongation factor SPT4 (120 aa).

Positions 1–39 (MSASVPADLRNLRACLLCSLVKSVESFQKEGCENCEDVL) are interaction with spt-5. A C4-type zinc finger spans residues 15–35 (CLLCSLVKSVESFQKEGCENC).

This sequence belongs to the SPT4 family. As to quaternary structure, interacts with spt-5 to form DSIF. DSIF interacts with RNA polymerase II and with the positive transcription elongation factor b complex (P-TEFb complex), which is composed of cdk-9 and cyclin-T (cit-1.1 or cit-1.2).

The protein resides in the nucleus. May function as a component of the DRB sensitivity-inducing factor complex (DSIF complex), which regulates transcription elongation by RNA polymerase II. DSIF may enhance transcriptional pausing at sites proximal to the promoter, which may in turn facilitate the assembly of an elongation competent RNA polymerase II complex. This is Transcription elongation factor SPT4 (spt-4) from Caenorhabditis elegans.